Reading from the N-terminus, the 241-residue chain is MNILYSILINLALFLLGYLLLGSFNTSIILSRRVKNDDIREHNSKNAGATNSLRTYGAKFALIVFATDVLKTLLPILIISAIVNHVPAVNAFSYASYISPQALGLGVVIGHIFPAYYKFKGGKGAACTVGLIISINIILFLIAFLIFLLVVGISKIVSLGSITVAFSLLLFVWMPWMIQGPTGYWTNAVEYTNSFTTLVNYWYVSPIIYTLCAFLVLVSHRDNFKRLINKSERKFAIKKAV.

Helical transmembrane passes span 3 to 23 (ILYS…LLGS), 63 to 83 (IVFA…SAIV), 97 to 117 (YISP…PAYY), 131 to 151 (LIIS…LLVV), 156 to 176 (IVSL…WMPW), and 198 to 218 (LVNY…LVLV).

This sequence belongs to the PlsY family. Probably interacts with PlsX.

Its subcellular location is the cell membrane. The enzyme catalyses an acyl phosphate + sn-glycerol 3-phosphate = a 1-acyl-sn-glycero-3-phosphate + phosphate. The protein operates within lipid metabolism; phospholipid metabolism. Functionally, catalyzes the transfer of an acyl group from acyl-phosphate (acyl-PO(4)) to glycerol-3-phosphate (G3P) to form lysophosphatidic acid (LPA). This enzyme utilizes acyl-phosphate as fatty acyl donor, but not acyl-CoA or acyl-ACP. The chain is Glycerol-3-phosphate acyltransferase from Mycoplasmopsis agalactiae (strain NCTC 10123 / CIP 59.7 / PG2) (Mycoplasma agalactiae).